We begin with the raw amino-acid sequence, 233 residues long: MKAICVLSGGLDSAVTSLVAKSENYDITTVTFNYGQMALNQEIKSAKKISEILNADNHVIDINFVKKFSKSGLNTGNIPEPEKEDLDDFEKSEKTMKAVWVPARNMIMFSIASGFAEGIDAEKIFSGLNKEEGVTFPDNTPEFIERFNKSLEYGTLNKVKMVAPLYKLNKPEIAKLGKELELKLDLEVIKYSYSCYRDNREDYLHCGTCESCMRRKRAFKEAGIVDPTKYLVE.

Residue 7–17 (LSGGLDSAVTS) participates in ATP binding. Positions 195, 206, 209, and 212 each coordinate Zn(2+).

Belongs to the QueC family. Requires Zn(2+) as cofactor.

The catalysed reaction is 7-carboxy-7-deazaguanine + NH4(+) + ATP = 7-cyano-7-deazaguanine + ADP + phosphate + H2O + H(+). Its pathway is purine metabolism; 7-cyano-7-deazaguanine biosynthesis. Its function is as follows. Catalyzes the ATP-dependent conversion of 7-carboxy-7-deazaguanine (CDG) to 7-cyano-7-deazaguanine (preQ(0)). The chain is 7-cyano-7-deazaguanine synthase from Methanococcus maripaludis (strain C6 / ATCC BAA-1332).